The chain runs to 215 residues: UPF0126 membrane protein DR_2368 (215 aa).

6 consecutive transmembrane segments (helical) span residues 15–35 (LHWL…LLGV), 39–59 (FDLF…GAIR), 75–95 (TYLW…ERLA), 101–121 (LSLF…LGAI), 123–143 (IGLG…GGGI), and 162–182 (LYAT…PHFT).

It belongs to the UPF0126 family.

The protein resides in the cell membrane. The sequence is that of UPF0126 membrane protein DR_2368 from Deinococcus radiodurans (strain ATCC 13939 / DSM 20539 / JCM 16871 / CCUG 27074 / LMG 4051 / NBRC 15346 / NCIMB 9279 / VKM B-1422 / R1).